Here is a 396-residue protein sequence, read N- to C-terminus: CCA-adding enzyme (396 aa).

ATP-binding residues include Gly-32 and Arg-35. Residues Gly-32 and Arg-35 each coordinate CTP. 2 residues coordinate Mg(2+): Asp-45 and Asp-47. Positions 116, 159, 162, 165, and 168 each coordinate ATP. Residues Arg-116, Asp-159, Arg-162, Arg-165, and Arg-168 each contribute to the CTP site.

It belongs to the tRNA nucleotidyltransferase/poly(A) polymerase family. Bacterial CCA-adding enzyme type 3 subfamily. As to quaternary structure, homodimer. Requires Mg(2+) as cofactor.

It catalyses the reaction a tRNA precursor + 2 CTP + ATP = a tRNA with a 3' CCA end + 3 diphosphate. The enzyme catalyses a tRNA with a 3' CCA end + 2 CTP + ATP = a tRNA with a 3' CCACCA end + 3 diphosphate. Its function is as follows. Catalyzes the addition and repair of the essential 3'-terminal CCA sequence in tRNAs without using a nucleic acid template. Adds these three nucleotides in the order of C, C, and A to the tRNA nucleotide-73, using CTP and ATP as substrates and producing inorganic pyrophosphate. tRNA 3'-terminal CCA addition is required both for tRNA processing and repair. Also involved in tRNA surveillance by mediating tandem CCA addition to generate a CCACCA at the 3' terminus of unstable tRNAs. While stable tRNAs receive only 3'-terminal CCA, unstable tRNAs are marked with CCACCA and rapidly degraded. In Lactobacillus delbrueckii subsp. bulgaricus (strain ATCC 11842 / DSM 20081 / BCRC 10696 / JCM 1002 / NBRC 13953 / NCIMB 11778 / NCTC 12712 / WDCM 00102 / Lb 14), this protein is CCA-adding enzyme.